Here is a 697-residue protein sequence, read N- to C-terminus: Elongation factor G (697 aa).

The tr-type G domain maps to Ala-10–Leu-285. GTP-binding positions include Ala-19–Thr-26, Asp-83–His-87, and Asn-137–Asp-140.

Belongs to the TRAFAC class translation factor GTPase superfamily. Classic translation factor GTPase family. EF-G/EF-2 subfamily.

It localises to the cytoplasm. In terms of biological role, catalyzes the GTP-dependent ribosomal translocation step during translation elongation. During this step, the ribosome changes from the pre-translocational (PRE) to the post-translocational (POST) state as the newly formed A-site-bound peptidyl-tRNA and P-site-bound deacylated tRNA move to the P and E sites, respectively. Catalyzes the coordinated movement of the two tRNA molecules, the mRNA and conformational changes in the ribosome. This is Elongation factor G from Lactobacillus helveticus (strain DPC 4571).